The following is a 6907-amino-acid chain: Fibrous sheath-interacting protein 2 (6907 aa).

The interval 273–292 (EERIEEQQHRNREESDRKKQ) is disordered. Ser430 carries the post-translational modification Phosphoserine. Disordered regions lie at residues 439–472 (SQAFLDPSKEEKETNADWDGRPTKRSSYLCESGP), 954–990 (FQKSRQPRISSPSDTKEKYRLTGTRLSNSPRSGRPFP), 1545–1573 (VQEDNKEETKSKAKPVAPVSSKTPSTKEM), 3202–3257 (VSSD…FDQT), 5650–5672 (RTSSNEGRRDSPTQTCRDEEHHS), 5725–5781 (SAQS…KPGI), 5850–5880 (DKGNQFPGGKVSSVPKVPPRYKEPTTDEAPS), and 6852–6874 (GSANPSKEVISETPKPDVSKQGS). A compositionally biased stretch (basic and acidic residues) spans 445–460 (PSKEEKETNADWDGRP). The segment covering 954–966 (FQKSRQPRISSPS) has biased composition (polar residues). Composition is skewed to basic and acidic residues over residues 1545–1555 (VQEDNKEETKS) and 3213–3229 (SVEDTVKNSEPTKRPDS). The segment covering 5728 to 5741 (SVTTKKVSSSTNKN) has biased composition (low complexity). Residues 5738 to 5766 (TNKNISAKEKEEEEREKEKVREEIKSEPS) adopt a coiled-coil conformation. Residues 5743–5778 (SAKEKEEEEREKEKVREEIKSEPSKPDDPQNQRESK) are compositionally biased toward basic and acidic residues.

As to quaternary structure, may interact with AKAP4. In terms of tissue distribution, predominantly expressed in testis.

In terms of biological role, plays a role in spermatogenesis. The sequence is that of Fibrous sheath-interacting protein 2 (FSIP2) from Homo sapiens (Human).